Consider the following 125-residue polypeptide: UPF0102 protein PSPA7_4996 (125 aa).

This sequence belongs to the UPF0102 family.

In Pseudomonas paraeruginosa (strain DSM 24068 / PA7) (Pseudomonas aeruginosa (strain PA7)), this protein is UPF0102 protein PSPA7_4996.